Consider the following 567-residue polypeptide: MSLTKKASEPKLSGTSIKPTTLNPHAAEFVPFTLRSPSSGGTSTLDTRLLASSSSVGKAVLDRTESSASHHSDEEARQFWSHQLPDDITPDFGLMTQDDNSYGSGSLSLANLSLFDGNEAEKFPSASGGYGFSDQTGLASHNANGNSLADKSRYPISSFGEDPQRQSFMQLSPKPWDKQIMNAEQLLGNDRERNPFSGKSRHGFVNDMITESPGDMEVNPVDFLASQFPGFAAESLAEVYFANGCDLQLTIEMLTQLELQVDGGLNQNISPKTYAPPSLTPMDFPALSISNSHGIPAQFGGDDLQQTGNHYQSPEKDNMFFFKSGPSVSQPGAIDYVSAVRKLASQDSGMWKYERNDSADSSIGSSRNSGAYKSGRGRSIYSDKLQSRAQTRPAPVWVETGDAVGNMYSELREEARDYARLRNVYFEQARQAYLVGNKALAKELSVKGQLHNMQMKAAHGKAQEAIYRQRNPVGQGNSRGNERMIDLHGLHVSEALQVLKHELSVLRSTARATQERLQIYICVGTGHHTRGSRTPARLPVAVQRYLLEEEGLDYSEPQAGLLRVIIY.

Positions 1–22 (MSLTKKASEPKLSGTSIKPTTL) are disordered. Polar residues predominate over residues 13-22 (SGTSIKPTTL). The PAM2-like motif lies at 21–31 (TLNPHAAEFVP). In terms of domain architecture, CUE spans 215-259 (DMEVNPVDFLASQFPGFAAESLAEVYFANGCDLQLTIEMLTQLEL). The disordered stretch occupies residues 355-387 (RNDSADSSIGSSRNSGAYKSGRGRSIYSDKLQS). Residues 359-371 (ADSSIGSSRNSGA) show a composition bias toward polar residues. A Smr domain is found at 485 to 567 (IDLHGLHVSE…QAGLLRVIIY (83 aa)).

In terms of assembly, interacts with MPC and PAB2. As to expression, expressed in cauline leaves, stems, rosette leaves, immature siliques and primary inflorescences.

The sequence is that of Polyadenylate-binding protein-interacting protein 7 (CID7) from Arabidopsis thaliana (Mouse-ear cress).